The following is a 505-amino-acid chain: Cytochrome P450 2K6 (505 aa).

Residues 7–27 (FLLQGSPTGTILGALLLFLVI) traverse the membrane as a helical segment. Cys-448 contributes to the heme binding site.

The protein belongs to the cytochrome P450 family. Heme serves as cofactor. In terms of tissue distribution, detected in liver and ovary.

The protein resides in the endoplasmic reticulum membrane. Its subcellular location is the microsome membrane. Metabolizes aflatoxin B1 (AFB1) to the cytotoxic derivative AFB1 exo-8,9-epoxide. Does not show activity towards lauric acid. The protein is Cytochrome P450 2K6 of Danio rerio (Zebrafish).